A 360-amino-acid polypeptide reads, in one-letter code: Mitogen-activated protein kinase 1 (360 aa).

Alanine 2 carries the N-acetylalanine modification. The Protein kinase domain occupies 25–313 (YTNLSYIGEG…VEQALAHPYL (289 aa)). Serine 29 carries the phosphoserine; by SGK1 modification. ATP-binding positions include 31–39 (IGEGAYGMV) and lysine 54. Aspartate 149 acts as the Proton acceptor in catalysis. A Phosphothreonine; by MAP2K1 and MAP2K2 modification is found at threonine 185. The short motif at 185–187 (TEY) is the TXY element. The residue at position 187 (tyrosine 187) is a Phosphotyrosine; by MAP2K1 and MAP2K2. Residue threonine 190 is modified to Phosphothreonine; by autocatalysis. Phosphoserine occurs at positions 246 and 248. Residues 259–277 (KARNYLLSLPHKNKVPWNR) mediate DNA binding. Serine 284 is modified (phosphoserine). The short motif at 318–322 (DPSDE) is the Cytoplasmic retention motif element. Residues 327 to 333 (APFKFDM) carry the Nuclear translocation motif motif.

This sequence belongs to the protein kinase superfamily. CMGC Ser/Thr protein kinase family. MAP kinase subfamily. As to quaternary structure, binds both upstream activators and downstream substrates in multimolecular complexes. This interaction inhibits its tyrosine-kinase activity. Interacts with ADAM15, ARHGEF2, ARRB2, DAPK1 (via death domain), HSF4, IER3, IPO7, NISCH, SGK1, and isoform 1 of NEK2. Interacts (via phosphorylated form) with TPR (via C-terminal region and phosphorylated form); the interaction requires dimerization of MAPK1/ERK2 and increases following EGF stimulation. Interacts with MAP2K1. Interacts with DUSP6. Interacts (phosphorylated form) with CAV2 ('Tyr-19'-phosphorylated form); the interaction, promoted by insulin, leads to nuclear location and MAPK1 activation. Interacts with MORG1, PEA15 and MKNK2. MKNK2 isoform 1 binding prevents from dephosphorylation and inactivation. Interacts with DCC. The phosphorylated form interacts with PML (isoform PML-4). Interacts with STYX. Interacts with CDK2AP2. Interacts with CAVIN4. Interacts with DUSP7; the interaction enhances DUSP7 phosphatase activity. Interacts with GIT1; this interaction is necessary for MAPK1 localization to focal adhesions. Interacts with ZNF263. Interacts with phosphoglycerate kinase PGK1; the interaction is direct, occurs under hypoxic conditions, and promotes interaction between PGK1 and PIN1. In terms of assembly, (Microbial infection) Interacts with HIV-1 Nef through its SH3 domain. Mg(2+) is required as a cofactor. In terms of processing, phosphorylated upon KIT and FLT3 signaling. Dually phosphorylated on Thr-185 and Tyr-187, which activates the enzyme. Undergoes regulatory phosphorylation on additional residues such as Ser-246 and Ser-248 in the kinase insert domain (KID) These phosphorylations, which are probably mediated by more than one kinase, are important for binding of MAPK1/ERK2 to importin-7 (IPO7) and its nuclear translocation. In addition, autophosphorylation of Thr-190 was shown to affect the subcellular localization of MAPK1/ERK2 as well. Ligand-activated ALK induces tyrosine phosphorylation. Dephosphorylated by PTPRJ at Tyr-187. Phosphorylation on Ser-29 by SGK1 results in its activation by enhancing its interaction with MAP2K1/MEK1 and MAP2K2/MEK2. DUSP3 and DUSP6 dephosphorylate specifically MAPK1/ERK2 and MAPK3/ERK1 whereas DUSP9 dephosphorylates a broader range of MAPKs. Dephosphorylated by DUSP1 and DUSP2 at Thr-185 and Tyr-187. Post-translationally, ISGylated. Ubiquitinated by TRIM15 via 'Lys-63'-linked ubiquitination; leading to activation. Deubiquitinated by CYLD.

Its subcellular location is the cytoplasm. It is found in the cytoskeleton. It localises to the spindle. The protein resides in the nucleus. The protein localises to the microtubule organizing center. Its subcellular location is the centrosome. It is found in the membrane. It localises to the caveola. The protein resides in the cell junction. The protein localises to the focal adhesion. It carries out the reaction L-seryl-[protein] + ATP = O-phospho-L-seryl-[protein] + ADP + H(+). The catalysed reaction is L-threonyl-[protein] + ATP = O-phospho-L-threonyl-[protein] + ADP + H(+). Its activity is regulated as follows. Phosphorylated by MAP2K1/MEK1 and MAP2K2/MEK2 on Thr-185 and Tyr-187 in response to external stimuli like insulin or NGF. Both phosphorylations are required for activity. This phosphorylation causes dramatic conformational changes, which enable full activation and interaction of MAPK1/ERK2 with its substrates. Phosphorylation on Ser-29 by SGK1 results in its activation by enhancing its interaction with MAP2K1/MEK1 and MAP2K2/MEK2. Dephosphorylated and inactivated by DUSP1, DUSP3, DUSP6 and DUSP9. Inactivated by pyrimidylpyrrole inhibitors. Functionally, serine/threonine kinase which acts as an essential component of the MAP kinase signal transduction pathway. MAPK1/ERK2 and MAPK3/ERK1 are the 2 MAPKs which play an important role in the MAPK/ERK cascade. They participate also in a signaling cascade initiated by activated KIT and KITLG/SCF. Depending on the cellular context, the MAPK/ERK cascade mediates diverse biological functions such as cell growth, adhesion, survival and differentiation through the regulation of transcription, translation, cytoskeletal rearrangements. The MAPK/ERK cascade also plays a role in initiation and regulation of meiosis, mitosis, and postmitotic functions in differentiated cells by phosphorylating a number of transcription factors. About 160 substrates have already been discovered for ERKs. Many of these substrates are localized in the nucleus, and seem to participate in the regulation of transcription upon stimulation. However, other substrates are found in the cytosol as well as in other cellular organelles, and those are responsible for processes such as translation, mitosis and apoptosis. Moreover, the MAPK/ERK cascade is also involved in the regulation of the endosomal dynamics, including lysosome processing and endosome cycling through the perinuclear recycling compartment (PNRC); as well as in the fragmentation of the Golgi apparatus during mitosis. The substrates include transcription factors (such as ATF2, BCL6, ELK1, ERF, FOS, HSF4 or SPZ1), cytoskeletal elements (such as CANX, CTTN, GJA1, MAP2, MAPT, PXN, SORBS3 or STMN1), regulators of apoptosis (such as BAD, BTG2, CASP9, DAPK1, IER3, MCL1 or PPARG), regulators of translation (such as EIF4EBP1 and FXR1) and a variety of other signaling-related molecules (like ARHGEF2, DCC, FRS2 or GRB10). Protein kinases (such as RAF1, RPS6KA1/RSK1, RPS6KA3/RSK2, RPS6KA2/RSK3, RPS6KA6/RSK4, SYK, MKNK1/MNK1, MKNK2/MNK2, RPS6KA5/MSK1, RPS6KA4/MSK2, MAPKAPK3 or MAPKAPK5) and phosphatases (such as DUSP1, DUSP4, DUSP6 or DUSP16) are other substrates which enable the propagation the MAPK/ERK signal to additional cytosolic and nuclear targets, thereby extending the specificity of the cascade. Mediates phosphorylation of TPR in response to EGF stimulation. May play a role in the spindle assembly checkpoint. Phosphorylates PML and promotes its interaction with PIN1, leading to PML degradation. Phosphorylates CDK2AP2. Phosphorylates phosphoglycerate kinase PGK1 under hypoxic conditions to promote its targeting to the mitochondrion and suppress the formation of acetyl-coenzyme A from pyruvate. In terms of biological role, acts as a transcriptional repressor. Binds to a [GC]AAA[GC] consensus sequence. Repress the expression of interferon gamma-induced genes. Seems to bind to the promoter of CCL5, DMP1, IFIH1, IFITM1, IRF7, IRF9, LAMP3, OAS1, OAS2, OAS3 and STAT1. Transcriptional activity is independent of kinase activity. The polypeptide is Mitogen-activated protein kinase 1 (Homo sapiens (Human)).